The following is a 320-amino-acid chain: MDSVEGLALGPVIWTASQEELLRQPYNHLVTQPGKNFRNTLIRVFNGFYGLSERQVAAVTELVEMLHVASLLIDDIEDNSAWRRGVAAAHVVYGSPMTINTANYMYFVSMSLLGQLAAQRPAGPLQDLLKVFNEEMMNLHRGQGLDIYWRDTFTVPSEHDYLRMVMHKTGGLFRLTVRIMEALREGPDGPGSTLVPLSNLLGVLYQVRDDYLNLTDSRMSENKGFADDITEGKFSYPIIHGLQYARVHDPAGYDFLVSVLRQRTTDITTKRRVVRYLADVSGSLAYTKQRIIELATLIKTKYIPASGTELCNVIDSLTSF.

Isopentenyl diphosphate contacts are provided by K35, R38, and H67. Residues D74 and D78 each coordinate Mg(2+). Dimethylallyl diphosphate is bound at residue R83. R84 contributes to the isopentenyl diphosphate binding site. Positions 168, 169, 206, 223, and 233 each coordinate dimethylallyl diphosphate.

It belongs to the FPP/GGPP synthase family. Mg(2+) serves as cofactor.

The protein resides in the cytoplasm. It carries out the reaction isopentenyl diphosphate + dimethylallyl diphosphate = (2E)-geranyl diphosphate + diphosphate. The catalysed reaction is isopentenyl diphosphate + (2E)-geranyl diphosphate = (2E,6E)-farnesyl diphosphate + diphosphate. It catalyses the reaction isopentenyl diphosphate + (2E,6E)-farnesyl diphosphate = (2E,6E,10E)-geranylgeranyl diphosphate + diphosphate. The protein operates within isoprenoid biosynthesis; farnesyl diphosphate biosynthesis; farnesyl diphosphate from geranyl diphosphate and isopentenyl diphosphate: step 1/1. It functions in the pathway isoprenoid biosynthesis; geranyl diphosphate biosynthesis; geranyl diphosphate from dimethylallyl diphosphate and isopentenyl diphosphate: step 1/1. It participates in isoprenoid biosynthesis; geranylgeranyl diphosphate biosynthesis; geranylgeranyl diphosphate from farnesyl diphosphate and isopentenyl diphosphate: step 1/1. Functionally, catalyzes the trans-addition of the 3 molecules of IPP onto DMAPP to form geranylgeranyl pyrophosphate. May be involved in vesicle trafficking and protein sorting. The sequence is that of Geranylgeranyl pyrophosphate synthase (BTS1) from Eremothecium gossypii (strain ATCC 10895 / CBS 109.51 / FGSC 9923 / NRRL Y-1056) (Yeast).